A 64-amino-acid polypeptide reads, in one-letter code: Potassium channel toxin kappa-KTx 3.1 (64 aa).

Residues 1–26 form the signal peptide; it reads MKSTLMTASVLILVLLSIVDYASVYA. The propeptide occupies 27-36; sequence EFIDSEISLE. 2 cysteine pairs are disulfide-bonded: Cys-43–Cys-61 and Cys-47–Cys-57.

Belongs to the short scorpion toxin superfamily. Potassium channel inhibitor kappa-KTx family. Kappa-KTx 3 subfamily. As to expression, expressed by the venom gland.

It localises to the secreted. In terms of biological role, potassium channel inhibitor (Kv). In Heterometrus petersii (Asian forest scorpion), this protein is Potassium channel toxin kappa-KTx 3.1.